The primary structure comprises 507 residues: Cobyric acid synthase (507 aa).

One can recognise a GATase cobBQ-type domain in the interval 251-448 (DIDIAVVHLP…LHGLFDSDAF (198 aa)). The active-site Nucleophile is cysteine 332. Residue histidine 440 is part of the active site.

Belongs to the CobB/CobQ family. CobQ subfamily.

The protein operates within cofactor biosynthesis; adenosylcobalamin biosynthesis. Functionally, catalyzes amidations at positions B, D, E, and G on adenosylcobyrinic A,C-diamide. NH(2) groups are provided by glutamine, and one molecule of ATP is hydrogenolyzed for each amidation. The sequence is that of Cobyric acid synthase from Klebsiella pneumoniae (strain 342).